The primary structure comprises 57 residues: Large ribosomal subunit protein bL32 (57 aa).

Residues 1-20 are compositionally biased toward basic residues; the sequence is MAVPKKKTSKTKRDQRKANW. The disordered stretch occupies residues 1 to 21; the sequence is MAVPKKKTSKTKRDQRKANWK.

The protein belongs to the bacterial ribosomal protein bL32 family.

This is Large ribosomal subunit protein bL32 from Rippkaea orientalis (strain PCC 8801 / RF-1) (Cyanothece sp. (strain PCC 8801)).